A 275-amino-acid polypeptide reads, in one-letter code: MNSKVALLVVGLAVVLALVIGRQGPVAPQATNTQSQAVAAGPVAAPVAFPQPLYPQAANVAMPVEPDPAAGGGTAPATESPLPNFVPRKLKVFEGHWQGMDGRLMTEELARKLNYPRGLQGVLLGEVTLNAAFSGLLAGDLIVRIDDTPVTDMESFKAASRTVANRSDARISVLRKDNRPGAPVVRKLTVVLREAEGGLGFAQLEGAPMILAGDPRPHGYRGACTDCHPIGQGFELTPDPDLISLPPPTITRDMVARSVNPHEVRGPCEACHVIK.

The Cytoplasmic segment spans residues 1–6; it reads MNSKVA. Residues 7-20 are membrane-embedded; the sequence is LLVVGLAVVLALVI. The Lumenal portion of the chain corresponds to 21–275; the sequence is GRQGPVAPQA…GPCEACHVIK (255 aa). The PDZ stretch occupies residues 89–206; the sequence is KLKVFEGHWQ…GGLGFAQLEG (118 aa). The MCR (magnetochrome) 1 motif lies at 210–230; that stretch reads ILAGDPRPHGYRGACTDCHPI. Residues Cys-224, Cys-227, His-228, Cys-268, Cys-271, and His-272 each coordinate heme. An MCR 2 motif is present at residues 250–274; it reads ITRDMVARSVNPHEVRGPCEACHVI.

The protein belongs to the magnetosome MamP family. As to quaternary structure, homodimer. Heme is required as a cofactor. Subject to proteolytic cleavage which requires both MamE and MamO.

It is found in the cell inner membrane. Involved in redox-control of magnetite formation; oxidizes Fe(2+) to Fe(3+) or to mixed-valent Fe(2+)-Fe(3+) oxide minerals. May control magnetite crystal size and number. Overproduction of MamP leads to more crystals than normal during exponential growth of normal size; in stationary phase crystal numbers become wild-type. The protein is Multi-heme protein MamP (mamP) of Paramagnetospirillum magneticum (strain ATCC 700264 / AMB-1) (Magnetospirillum magneticum).